A 430-amino-acid chain; its full sequence is DD-carboxypeptidase/endopeptidase Mpg (430 aa).

Residues H295, D299, and H375 each contribute to the Zn(2+) site.

The protein belongs to the peptidase M23B family. As to quaternary structure, monomer. Zn(2+) is required as a cofactor. In terms of processing, likely to be synthesized as a proenzyme. The cleavage of the N-terminal domain is probably required for the activation of the enzyme.

The protein resides in the cell outer membrane. Its function is as follows. Has both endopeptidase and DD-carboxypeptidase activities. Degrades cell wall peptidoglycan (PG) to allow consummate expression of pili. The sequence is that of DD-carboxypeptidase/endopeptidase Mpg from Neisseria meningitidis serogroup B (strain ATCC BAA-335 / MC58).